We begin with the raw amino-acid sequence, 701 residues long: MMIPSGECTYAGRKRRKPIQKRRLTMGTEKSNPSKRHRDRLNTELDHLASLLPFSPDIISKLDKLSVLRLSVSYLRVKSFFQALQETCVWSAPALSPEDHSSRGFPVQEGRLLLESLNGFALVVSAEGMIFYASATIVDYLGFHQTDVMHQNIYDYIHVDDRQDFCRQLHWAMDPPQVVFGQSPHADTDNTVLGKLLRAQEGGKGLPSEYSAFLTRCFICRVRCLLDSTSGFLTMQFQGKLKFLFGQKKKTPSGTALPPRLSLFCIVAPVLPSVTEMKMKSAFLKAKHRADIVVTMDSRAKAVTSLCESELHPKLNYLAGRSNGENVISLFRGQTDRSHWTRALARSSCLCLRGGPDLLDPKGTSGDREEDDQKHILRRSPGARGQREMHKYSYGLETPVHLRHLDWSTEQRSQEGTTKLTRQPSKSEPSTCLVPHGSCVPYPGSQGMFSASNMASFRESLDHPTGTYCSQMNRPLPDIHQGQVDPSTCHIPQGSLGSRIPLSGMQCFTARGFSTEDAKLPSLPVNIGTPCNPVLSLEVPIKMENESGSQDIVEASTTSCVWLGTGDMTRRHLVGFPARMHLKTEPDYRQQVCTPHRGHGILGTNPHSRDTVGSCREHAPLYSAHCTCLSPEPPHHLFMCSHSESQHPSLDQDCRAPIVKREPLDSPSWAAPGHVTVPRMFPKNASITVIPSKGSDGIFLP.

The segment at 1-38 (MMIPSGECTYAGRKRRKPIQKRRLTMGTEKSNPSKRHR) is disordered. Over residues 12-24 (GRKRRKPIQKRRL) the composition is skewed to basic residues. Residues 25-78 (TMGTEKSNPSKRHRDRLNTELDHLASLLPFSPDIISKLDKLSVLRLSVSYLRVK) enclose the bHLH domain. The PAS domain occupies 106–176 (PVQEGRLLLE…RQLHWAMDPP (71 aa)). 2 disordered regions span residues 360–389 (DPKGTSGDREEDDQKHILRRSPGARGQREM) and 409–436 (TEQRSQEGTTKLTRQPSKSEPSTCLVPH). Positions 365 to 375 (SGDREEDDQKH) are enriched in basic and acidic residues. A compositionally biased stretch (polar residues) spans 414–430 (QEGTTKLTRQPSKSEPS). Positions 555–701 (ASTTSCVWLG…SKGSDGIFLP (147 aa)) are needed for transcriptional repression. Glycyl lysine isopeptide (Lys-Gly) (interchain with G-Cter in SUMO2) cross-links involve residues Lys-583 and Lys-660.

In terms of assembly, interacts with ARNT, ANKRA2, HDAC4 and HDAC5. Interacts with ARNT; forms a heterodimer with ARNT. Highly expressed in testis and weakly expressed in heart and liver. Highly expressed in small intestine and cecum in a male-dominant sexual dimorphic fashion.

The protein resides in the cytoplasm. Its subcellular location is the nucleus. In terms of biological role, mediates dioxin toxicity and is involved in regulation of cell growth and differentiation. Represses the transcription activity of AHR by competing with this transcription factor for heterodimer formation with the ARNT and subsequently binding to the xenobiotic response element (XRE) sequence present in the promoter regulatory region of variety of genes. Represses CYP1A1 by binding the XRE sequence and recruiting ANKRA2, HDAC4 and/or HDAC5. Autoregulates its expression by associating with its own XRE site. The sequence is that of Aryl hydrocarbon receptor repressor (Ahrr) from Rattus norvegicus (Rat).